A 237-amino-acid polypeptide reads, in one-letter code: Pyridoxine 5'-phosphate synthase (237 aa).

3-amino-2-oxopropyl phosphate-binding residues include asparagine 7 and arginine 18. The Proton acceptor role is filled by histidine 43. 1-deoxy-D-xylulose 5-phosphate is bound by residues arginine 45 and histidine 50. Glutamate 70 acts as the Proton acceptor in catalysis. Residue threonine 100 coordinates 1-deoxy-D-xylulose 5-phosphate. The active-site Proton donor is histidine 190. Residues aspartate 191 and glycine 213–histidine 214 contribute to the 3-amino-2-oxopropyl phosphate site.

Belongs to the PNP synthase family. Homooctamer; tetramer of dimers.

Its subcellular location is the cytoplasm. The catalysed reaction is 3-amino-2-oxopropyl phosphate + 1-deoxy-D-xylulose 5-phosphate = pyridoxine 5'-phosphate + phosphate + 2 H2O + H(+). The protein operates within cofactor biosynthesis; pyridoxine 5'-phosphate biosynthesis; pyridoxine 5'-phosphate from D-erythrose 4-phosphate: step 5/5. In terms of biological role, catalyzes the complicated ring closure reaction between the two acyclic compounds 1-deoxy-D-xylulose-5-phosphate (DXP) and 3-amino-2-oxopropyl phosphate (1-amino-acetone-3-phosphate or AAP) to form pyridoxine 5'-phosphate (PNP) and inorganic phosphate. The sequence is that of Pyridoxine 5'-phosphate synthase from Christiangramia forsetii (strain DSM 17595 / CGMCC 1.15422 / KT0803) (Gramella forsetii).